Here is a 179-residue protein sequence, read N- to C-terminus: Crossover junction endodeoxyribonuclease RuvC (179 aa).

Residues Asp-7 and Glu-67 contribute to the active site. Mn(2+)-binding residues include Asp-7 and Glu-67. Positions 68 to 74 (DQILRRQ) match the DNA-binding loop motif. Active-site residues include His-139 and Asp-142. Mn(2+) is bound at residue His-139.

Belongs to the RuvC family. Homodimer which binds Holliday junction (HJ) DNA. The HJ becomes 2-fold symmetrical on binding to RuvC with unstacked arms; it has a different conformation from HJ DNA in complex with RuvA. In the full resolvosome a probable DNA-RuvA(4)-RuvB(12)-RuvC(2) complex forms which resolves the HJ. Requires Mn(2+) as cofactor.

It localises to the cytoplasm. The catalysed reaction is Endonucleolytic cleavage at a junction such as a reciprocal single-stranded crossover between two homologous DNA duplexes (Holliday junction).. Functionally, the RuvA-RuvB-RuvC complex processes Holliday junction (HJ) DNA during genetic recombination and DNA repair. Endonuclease that resolves HJ intermediates. Cleaves cruciform DNA by making single-stranded nicks across the HJ at symmetrical positions within the homologous arms, probably yielding a 5'-phosphate and a 3'-hydroxyl group; requires a central core of homology in the junction. The consensus cleavage sequence is 5'-(G/C)TC(C/G)-3' (a different site than E.coli); cleavage occurs on the 3'-side of the TC dinucleotide at the point of strand exchange. Also resolves nicked HJ intermediates, replication forks and Y-junction DNA in vitro. HJ branch migration catalyzed by RuvA-RuvB allows RuvC to scan DNA until it finds its consensus sequence, where it cleaves and resolves the cruciform DNA. Its function is as follows. Binds HJ DNA independently of homologous core or consensus sequence; Mn(2+) is not essential for binding but improves it, while &gt;1.0 mM Mg(2+) inhibit binding. Also binds Y-junction DNA less well. Requires a homologous core to cleave DNA. Another study shows divalent cations (Mn(2+), Mg(2+) and Ca(2+), tested up to 5.0 mM) improve DNA binding considerably over binding in their absence. This is Crossover junction endodeoxyribonuclease RuvC from Deinococcus radiodurans (strain ATCC 13939 / DSM 20539 / JCM 16871 / CCUG 27074 / LMG 4051 / NBRC 15346 / NCIMB 9279 / VKM B-1422 / R1).